The sequence spans 277 residues: Caspase-3 (277 aa).

N-acetylmethionine is present on M1. Propeptides lie at residues 1-9 and 10-28; these read MENTENSVD and SKSI…QSMD. The segment covering 1 to 10 has biased composition (polar residues); it reads MENTENSVDS. A disordered region spans residues 1 to 20; it reads MENTENSVDSKSIKNLEPKI. K11 is subject to N6-acetyllysine. The segment covering 11–20 has biased composition (basic and acidic residues); that stretch reads KSIKNLEPKI. Position 26 is a phosphoserine (S26). Catalysis depends on residues H121 and C163. C163 is modified (S-nitrosocysteine; in inhibited form).

This sequence belongs to the peptidase C14A family. Heterotetramer that consists of two anti-parallel arranged heterodimers, each one formed by a 17 kDa (p17) and a 12 kDa (p12) subunit. Interacts with BIRC6/bruce. In terms of processing, cleavage by granzyme B, caspase-6, caspase-8 and caspase-10 generates the two active subunits. Additional processing of the propeptides is likely due to the autocatalytic activity of the activated protease. Active heterodimers between the small subunit of caspase-7 protease and the large subunit of caspase-3 also occur and vice versa. S-nitrosylated on its catalytic site cysteine in unstimulated cell lines and denitrosylated upon activation of the Fas apoptotic pathway, associated with an increase in intracellular caspase activity. Fas therefore activates caspase-3 not only by inducing the cleavage of the caspase zymogen to its active subunits, but also by stimulating the denitrosylation of its active site thiol. Post-translationally, ubiquitinated by BIRC6; this activity is inhibited by DIABLO/SMAC.

It localises to the cytoplasm. It carries out the reaction Strict requirement for an Asp residue at positions P1 and P4. It has a preferred cleavage sequence of Asp-Xaa-Xaa-Asp-|- with a hydrophobic amino-acid residue at P2 and a hydrophilic amino-acid residue at P3, although Val or Ala are also accepted at this position.. With respect to regulation, inhibited by BIRC6; following inhibition of BIRC6-caspase binding by DIABLO/SMAC, BIRC6 is subjected to caspase cleavage, leading to an increase in active caspases. Its function is as follows. Involved in the activation cascade of caspases responsible for apoptosis execution. At the onset of apoptosis, it proteolytically cleaves poly(ADP-ribose) polymerase PARP1 at a '216-Asp-|-Gly-217' bond. Cleaves and activates sterol regulatory element binding proteins (SREBPs) between the basic helix-loop-helix leucine zipper domain and the membrane attachment domain. Cleaves and activates caspase-6, -7 and -9 (CASP6, CASP7 and CASP9, respectively). Cleaves and inactivates interleukin-18 (IL18). Triggers cell adhesion in sympathetic neurons through RET cleavage. Cleaves IL-1 beta between an Asp and an Ala, releasing the mature cytokine which is involved in a variety of inflammatory processes. Cleaves and inhibits serine/threonine-protein kinase AKT1 in response to oxidative stress. Acts as an inhibitor of type I interferon production during virus-induced apoptosis by mediating cleavage of antiviral proteins CGAS, IRF3 and MAVS, thereby preventing cytokine overproduction. Also involved in pyroptosis by mediating cleavage and activation of gasdermin-E (GSDME). Cleaves XRCC4 and phospholipid scramblase proteins XKR4, XKR8 and XKR9, leading to promote phosphatidylserine exposure on apoptotic cell surface. Cleaves BIRC6 following inhibition of BIRC6-caspase binding by DIABLO/SMAC. The protein is Caspase-3 (CASP3) of Pan troglodytes (Chimpanzee).